The chain runs to 538 residues: Chaperonin GroEL 1 (538 aa).

ATP contacts are provided by residues 30 to 33 (TLGP), K51, 87 to 91 (DGTTT), G415, 479 to 481 (NAA), and D495.

Belongs to the chaperonin (HSP60) family. As to quaternary structure, forms a cylinder of 14 subunits composed of two heptameric rings stacked back-to-back. Interacts with the co-chaperonin GroES.

It localises to the cytoplasm. It carries out the reaction ATP + H2O + a folded polypeptide = ADP + phosphate + an unfolded polypeptide.. In terms of biological role, together with its co-chaperonin GroES, plays an essential role in assisting protein folding. The GroEL-GroES system forms a nano-cage that allows encapsulation of the non-native substrate proteins and provides a physical environment optimized to promote and accelerate protein folding. This Chromobacterium violaceum (strain ATCC 12472 / DSM 30191 / JCM 1249 / CCUG 213 / NBRC 12614 / NCIMB 9131 / NCTC 9757 / MK) protein is Chaperonin GroEL 1.